We begin with the raw amino-acid sequence, 47 residues long: Large ribosomal subunit protein bL36A (47 aa).

The protein belongs to the bacterial ribosomal protein bL36 family.

This chain is Large ribosomal subunit protein bL36A, found in Yersinia enterocolitica serotype O:8 / biotype 1B (strain NCTC 13174 / 8081).